We begin with the raw amino-acid sequence, 81 residues long: ATP synthase subunit c, chloroplastic (81 aa).

2 helical membrane-spanning segments follow: residues 3–23 (PLIA…ASIG) and 57–77 (LAFM…LLFA).

This sequence belongs to the ATPase C chain family. As to quaternary structure, F-type ATPases have 2 components, F(1) - the catalytic core - and F(0) - the membrane proton channel. F(1) has five subunits: alpha(3), beta(3), gamma(1), delta(1), epsilon(1). F(0) has four main subunits: a(1), b(1), b'(1) and c(10-14). The alpha and beta chains form an alternating ring which encloses part of the gamma chain. F(1) is attached to F(0) by a central stalk formed by the gamma and epsilon chains, while a peripheral stalk is formed by the delta, b and b' chains.

The protein resides in the plastid. It localises to the chloroplast thylakoid membrane. Its function is as follows. F(1)F(0) ATP synthase produces ATP from ADP in the presence of a proton or sodium gradient. F-type ATPases consist of two structural domains, F(1) containing the extramembraneous catalytic core and F(0) containing the membrane proton channel, linked together by a central stalk and a peripheral stalk. During catalysis, ATP synthesis in the catalytic domain of F(1) is coupled via a rotary mechanism of the central stalk subunits to proton translocation. Functionally, key component of the F(0) channel; it plays a direct role in translocation across the membrane. A homomeric c-ring of between 10-14 subunits forms the central stalk rotor element with the F(1) delta and epsilon subunits. The protein is ATP synthase subunit c, chloroplastic of Agrostis stolonifera (Creeping bentgrass).